The chain runs to 1194 residues: ATP-dependent RNA helicase DHX30 (1194 aa).

A compositionally biased stretch (basic and acidic residues) spans 1-10; it reads MFSLDSFRKD. A disordered region spans residues 1 to 27; sequence MFSLDSFRKDRAQHRQRQCKLPPPRLP. Phosphoserine is present on residues serine 6 and arginine 15. The region spanning 53–121 is the DRBM domain; that stretch reads PKNLLNSVIG…QAAAAACQLF (69 aa). Residues 150 to 199 are disordered; sequence ADSWWRPEPTMPPTSWRQLNPESIRPGGPGGLSRSLGREEEEDEEEELEE. The segment covering 188-199 has biased composition (acidic residues); sequence EEEEDEEEELEE. Serine 226 and serine 380 each carry phosphoserine. Residues 444–612 enclose the Helicase ATP-binding domain; it reads LNAIEQHPVV…FGGCPVIKVP (169 aa). Residue 457–464 coordinates ATP; sequence GDTGCGKT. The short motif at 559 to 562 is the DEAH box element; it reads DEVH. One can recognise a Helicase C-terminal domain in the interval 654 to 827; sequence LVTDLVLHID…NLVLQAKIHM (174 aa).

Belongs to the DEAD box helicase family. DEAH subfamily. Identified in a complex with TFAM and SSBP1. Interacts with AGO1 and AGO2. Interacts (via N-terminus) with ZC3HAV1 (via N-terminal domain) in an RNA-independent manner. Found in a complex with GRSF1, DDX28, FASTKD2 and FASTKD5. Phosphorylated on Ser-15.

The protein localises to the cytoplasm. The protein resides in the mitochondrion. It localises to the mitochondrion matrix. It is found in the mitochondrion nucleoid. It catalyses the reaction ATP + H2O = ADP + phosphate + H(+). RNA-dependent helicase. Plays an important role in the assembly of the mitochondrial large ribosomal subunit. Required for optimal function of the zinc-finger antiviral protein ZC3HAV1. Associates with mitochondrial DNA. Involved in nervous system development and differentiation through its involvement in the up-regulation of a number of genes which are required for neurogenesis, including GSC, NCAM1, neurogenin, and NEUROD. The polypeptide is ATP-dependent RNA helicase DHX30 (DHX30) (Homo sapiens (Human)).